A 106-amino-acid polypeptide reads, in one-letter code: MLMTTTPTIEGRTIRSYHGVVAGEAIIGANVFKDMFAAVRDIVGGRSGSYEKTLRSARETAFEDLAEAAGRLGANAVVGVDIDYEVLGEKNGMLMVAVSGTAVTVE.

Belongs to the UPF0145 family.

In Aromatoleum aromaticum (strain DSM 19018 / LMG 30748 / EbN1) (Azoarcus sp. (strain EbN1)), this protein is UPF0145 protein AZOSEA16190.